The chain runs to 83 residues: MSSGGLLLLLGLLTLWEGLTPVSSKDRPDFCELPDDRGPCRGIFHAFYYNPDQRQCLEFIYGGCYGNANNFKTIDECKRTCAA.

A signal peptide spans 1 to 24; the sequence is MSSGGLLLLLGLLTLWEGLTPVSS. The BPTI/Kunitz inhibitor domain maps to 31–81; the sequence is CELPDDRGPCRGIFHAFYYNPDQRQCLEFIYGGCYGNANNFKTIDECKRTC. 3 cysteine pairs are disulfide-bonded: C31–C81, C40–C64, and C56–C77.

This sequence belongs to the venom Kunitz-type family. In terms of tissue distribution, expressed by the venom gland.

The protein localises to the secreted. Its function is as follows. Serine protease inhibitor. In Pseudechis porphyriacus (Red-bellied black snake), this protein is Kunitz-type serine protease inhibitor blackelin-2.